We begin with the raw amino-acid sequence, 448 residues long: Argininosuccinate synthase (448 aa).

Residues 17–25 (AFSGGLDTS) and A43 each bind ATP. Y99 contributes to the L-citrulline binding site. The ATP site is built by G129 and T131. L-aspartate-binding residues include T131, N135, and D136. Residue N135 coordinates L-citrulline. D136 contributes to the ATP binding site. L-citrulline-binding residues include R139 and S192. An ATP-binding site is contributed by D194. L-citrulline-binding residues include T201, E203, and E280.

This sequence belongs to the argininosuccinate synthase family. Type 2 subfamily. In terms of assembly, homotetramer.

It localises to the cytoplasm. It catalyses the reaction L-citrulline + L-aspartate + ATP = 2-(N(omega)-L-arginino)succinate + AMP + diphosphate + H(+). It participates in amino-acid biosynthesis; L-arginine biosynthesis; L-arginine from L-ornithine and carbamoyl phosphate: step 2/3. This chain is Argininosuccinate synthase, found in Enterobacter sp. (strain 638).